Here is a 508-residue protein sequence, read N- to C-terminus: Strychnine-11-hydroxylase (508 aa).

The helical transmembrane segment at Met5–Ile25 threads the bilayer. Cys445 contributes to the heme binding site.

The protein belongs to the cytochrome P450 family. Heme serves as cofactor.

It localises to the membrane. It catalyses the reaction beta-colubrine + reduced [NADPH--hemoprotein reductase] + O2 = 11-demethylbrucine + oxidized [NADPH--hemoprotein reductase] + H2O + H(+). Its pathway is alkaloid biosynthesis. Its function is as follows. Monooxygenase involved in the biosynthesis of curare monoterpene indole alkaloids (MIAs), natural products such as strychnine, a neurotoxic compound used as a pesticide to control rodents, and its pharmacologically active derivatives, including brucine, used to regulate blood pressure. Curare alkaloids act as animal glycine receptor antagonists. Catalyzes the conversion of beta-colubrine to 11-deMe brucine. This Strychnos nux-vomica (Poison nut) protein is Strychnine-11-hydroxylase.